Reading from the N-terminus, the 52-residue chain is Large ribosomal subunit protein bL33 (52 aa).

This sequence belongs to the bacterial ribosomal protein bL33 family.

In Campylobacter jejuni subsp. doylei (strain ATCC BAA-1458 / RM4099 / 269.97), this protein is Large ribosomal subunit protein bL33.